A 640-amino-acid chain; its full sequence is Biosynthetic arginine decarboxylase (640 aa).

Lys-105 carries the post-translational modification N6-(pyridoxal phosphate)lysine. Residue 290–300 participates in substrate binding; it reads FDVGGGLAVDY.

Belongs to the Orn/Lys/Arg decarboxylase class-II family. SpeA subfamily. Requires Mg(2+) as cofactor. Pyridoxal 5'-phosphate is required as a cofactor.

It catalyses the reaction L-arginine + H(+) = agmatine + CO2. Functionally, catalyzes the biosynthesis of agmatine from arginine. The sequence is that of Biosynthetic arginine decarboxylase from Vibrio cholerae serotype O1 (strain ATCC 39315 / El Tor Inaba N16961).